The following is a 198-amino-acid chain: Segregation and condensation protein B (198 aa).

Belongs to the ScpB family. In terms of assembly, homodimer. Homodimerization may be required to stabilize the binding of ScpA to the Smc head domains. Component of a cohesin-like complex composed of ScpA, ScpB and the Smc homodimer, in which ScpA and ScpB bind to the head domain of Smc. The presence of the three proteins is required for the association of the complex with DNA.

It localises to the cytoplasm. Its function is as follows. Participates in chromosomal partition during cell division. May act via the formation of a condensin-like complex containing Smc and ScpA that pull DNA away from mid-cell into both cell halves. The polypeptide is Segregation and condensation protein B (Streptococcus mutans serotype c (strain ATCC 700610 / UA159)).